We begin with the raw amino-acid sequence, 378 residues long: MDFYRPLLRPLLLSQLNVDPEWLTRNALGFLATLARSRSPLAANLRSYLRQTYGFQDPRLAMSLWGLTFATPVGLAAGFDKDGIAAPLWSDLGFGFAELGTVTALAQPGNPRPRLFRIPQDLAAFNRMGFNNASAEALADTLRGYFPEGQRSIPIGINLGKSKLTPLSGAVSDYVSSFRSLRSLGDYFVVNVSSPNTPGLRSLQAVTELEPILAALQAENTEQRPLLLKIAPDLVDEEVVAIAHLAQRQQLAGIIATNTTIDKSLLSVEHLPGRREPLATEAGGISGAPLRSRSTEVIRLLHRTTQGQLPIIGVGGIFSAEDAWQKIVAGASLVQVYTGWVYEGPLLVKTIQQGLLERLDSAGLPNLAAAVGSAAIDS.

FMN contacts are provided by residues 77–81 (AGFDK) and Thr-101. Residue Lys-81 coordinates substrate. A substrate-binding site is contributed by 126-130 (NRMGF). 2 residues coordinate FMN: Asn-158 and Asn-191. Asn-191 provides a ligand contact to substrate. The active-site Nucleophile is the Ser-194. Asn-196 serves as a coordination point for substrate. Residues Lys-229 and Thr-257 each contribute to the FMN site. 258–259 (NT) is a binding site for substrate. FMN-binding positions include Gly-287, Gly-316, and 337-338 (YT).

The protein belongs to the dihydroorotate dehydrogenase family. Type 2 subfamily. In terms of assembly, monomer. The cofactor is FMN.

Its subcellular location is the cell membrane. The catalysed reaction is (S)-dihydroorotate + a quinone = orotate + a quinol. It functions in the pathway pyrimidine metabolism; UMP biosynthesis via de novo pathway; orotate from (S)-dihydroorotate (quinone route): step 1/1. Catalyzes the conversion of dihydroorotate to orotate with quinone as electron acceptor. The polypeptide is Dihydroorotate dehydrogenase (quinone) (Synechococcus sp. (strain ATCC 27144 / PCC 6301 / SAUG 1402/1) (Anacystis nidulans)).